The primary structure comprises 284 residues: 2-dehydro-3-deoxyphosphooctonate aldolase (284 aa).

The protein belongs to the KdsA family.

The protein localises to the cytoplasm. It carries out the reaction D-arabinose 5-phosphate + phosphoenolpyruvate + H2O = 3-deoxy-alpha-D-manno-2-octulosonate-8-phosphate + phosphate. It participates in carbohydrate biosynthesis; 3-deoxy-D-manno-octulosonate biosynthesis; 3-deoxy-D-manno-octulosonate from D-ribulose 5-phosphate: step 2/3. It functions in the pathway bacterial outer membrane biogenesis; lipopolysaccharide biosynthesis. This chain is 2-dehydro-3-deoxyphosphooctonate aldolase, found in Burkholderia mallei (strain NCTC 10247).